The following is a 159-amino-acid chain: UPF0756 membrane protein PTH_1668 (159 aa).

4 helical membrane-spanning segments follow: residues 15-37 (ILIT…SSCI), 61-81 (LGLV…KLTI), 117-137 (PEII…LRGT), and 138-158 (PCGP…ASLF).

Belongs to the UPF0756 family.

It localises to the cell membrane. This is UPF0756 membrane protein PTH_1668 from Pelotomaculum thermopropionicum (strain DSM 13744 / JCM 10971 / SI).